A 218-amino-acid chain; its full sequence is Cytochrome b6 (218 aa).

The helical transmembrane segment at 35–55 (IFYCLGGITLVCFLIQFATGF) threads the bilayer. Cys-38 is a heme c binding site. Heme b is bound by residues His-89 and His-103. Helical transmembrane passes span 93-113 (ASMM…TGGF), 119-139 (LTWV…VTGY), and 189-209 (LHTF…FLMI). Heme b-binding residues include His-190 and His-205.

It belongs to the cytochrome b family. PetB subfamily. The 4 large subunits of the cytochrome b6-f complex are cytochrome b6, subunit IV (17 kDa polypeptide, PetD), cytochrome f and the Rieske protein, while the 4 small subunits are PetG, PetL, PetM and PetN. The complex functions as a dimer. Requires heme b as cofactor. Heme c serves as cofactor.

It localises to the cellular thylakoid membrane. Its function is as follows. Component of the cytochrome b6-f complex, which mediates electron transfer between photosystem II (PSII) and photosystem I (PSI), cyclic electron flow around PSI, and state transitions. The chain is Cytochrome b6 from Prochlorococcus marinus subsp. pastoris (strain CCMP1986 / NIES-2087 / MED4).